Reading from the N-terminus, the 205-residue chain is Small ribosomal subunit protein uS5 (205 aa).

Residues 1–25 (MSGAQRGQRGGERRGGRDDRRGQGA) form a disordered region. The span at 9 to 24 (RGGERRGGRDDRRGQG) shows a compositional bias: basic and acidic residues. Positions 30–93 (YIERVVAINR…EEAKKHFFRV (64 aa)) constitute an S5 DRBM domain.

It belongs to the universal ribosomal protein uS5 family. In terms of assembly, part of the 30S ribosomal subunit. Contacts proteins S4 and S8.

With S4 and S12 plays an important role in translational accuracy. Its function is as follows. Located at the back of the 30S subunit body where it stabilizes the conformation of the head with respect to the body. This is Small ribosomal subunit protein uS5 from Nocardioides sp. (strain ATCC BAA-499 / JS614).